The primary structure comprises 297 residues: uncharacterized protein (297 aa).

Residue Glu46 is part of the active site.

Belongs to the PhzF family. Homodimer and homotetramer.

This is an uncharacterized protein from Salmonella typhimurium (strain LT2 / SGSC1412 / ATCC 700720).